The sequence spans 219 residues: Ribose-5-phosphate isomerase A (219 aa).

Substrate contacts are provided by residues 28–31 (SGST), 81–84 (DGAD), and 94–97 (KGGG). Residue E103 is the Proton acceptor of the active site. K121 provides a ligand contact to substrate.

This sequence belongs to the ribose 5-phosphate isomerase family. In terms of assembly, homodimer.

It catalyses the reaction aldehydo-D-ribose 5-phosphate = D-ribulose 5-phosphate. It functions in the pathway carbohydrate degradation; pentose phosphate pathway; D-ribose 5-phosphate from D-ribulose 5-phosphate (non-oxidative stage): step 1/1. Its function is as follows. Catalyzes the reversible conversion of ribose-5-phosphate to ribulose 5-phosphate. The sequence is that of Ribose-5-phosphate isomerase A from Mannheimia succiniciproducens (strain KCTC 0769BP / MBEL55E).